Consider the following 607-residue polypeptide: Protein NRT1/ PTR FAMILY 1.2 (607 aa).

10 consecutive transmembrane segments (helical) span residues 65–85 (TNVLFMWSAASNFTPLLGAFL), 96–116 (ISIASLSSFLGMVLLWLTAML), 138–158 (ASQLALLYSAFALISIGSGGI), 185–205 (FFGWYYASSAVAVLIAFTGIV), 215–235 (IGFGVPAVLMLIAALLFILAS), 374–394 (VPAGSFGMFTIIALALWVILY), 418–438 (MGLGLFMSFLAMAISAMVESF), 460–480 (AMWLVPQYVLHGLAEALTAIG), 496–516 (IAASLFGLGMAVASLLASVVL), and 544–564 (YYWVLAIMSFINVIYYVICSW). S601 bears the Phosphoserine mark.

This sequence belongs to the major facilitator superfamily. Proton-dependent oligopeptide transporter (POT/PTR) (TC 2.A.17) family. As to expression, expressed in shoots, stems, leaves, flowers and siliques. Mainly detected in larger expanded leaves, in the companion cells of major veins.

The protein resides in the cell membrane. In terms of biological role, low-affinity nitrate transporter involved in xylem-to-phloem transfer for redistributing nitrate into developing leaves. Not involved in dipeptides transport. The sequence is that of Protein NRT1/ PTR FAMILY 1.2 (NPF1.2) from Arabidopsis thaliana (Mouse-ear cress).